Consider the following 180-residue polypeptide: E3 ubiquitin-protein ligase RNF5 (180 aa).

Ala-2 is modified (N-acetylalanine). The segment at 27–68 (CNICLETAREAVVSVCGHLYCWPCLHQWLETRPERQECPVCK) adopts an RING-type zinc-finger fold. The disordered stretch occupies residues 79-110 (LYGRGSQKPQDPRLKTPPRPQGQRPAPESRGG). Ser-84 carries the phosphoserine modification. Thr-94 carries the post-translational modification Phosphothreonine. Ser-107 carries the post-translational modification Phosphoserine. 2 consecutive transmembrane segments (helical) span residues 118–138 (GGFH…TTVF) and 160–180 (SWQD…LLSI).

The protein belongs to the RNF5 family. Interacts with PXN. Interacts with Salmonella typhimurium sopA. Interacts with JKAMP. Interacts with STING1; the interaction of endogenous proteins is dependent on viral infection. Widely expressed.

It localises to the cell membrane. It is found in the mitochondrion membrane. The protein resides in the endoplasmic reticulum membrane. It catalyses the reaction S-ubiquitinyl-[E2 ubiquitin-conjugating enzyme]-L-cysteine + [acceptor protein]-L-lysine = [E2 ubiquitin-conjugating enzyme]-L-cysteine + N(6)-ubiquitinyl-[acceptor protein]-L-lysine.. It participates in protein modification; protein ubiquitination. Functionally, membrane-bound E3 ubiquitin-protein ligase that mediates ubiquitination of target proteins. May function together with E2 ubiquitin-conjugating enzymes UBE2D1/UBCH5A and UBE2D2/UBC4. Mediates ubiquitination of PXN/paxillin,thereby regulating cell motility and localization of PXN/paxillin. Catalyzes ubiquitination of Salmonella type III secreted protein sopA. Mediates the 'Lys-63'-linked polyubiquitination of JKAMP thereby regulating JKAMP function by decreasing its association with components of the proteasome and ERAD; the ubiquitination appears to involve E2 ubiquitin-conjugating enzyme UBE2N. Mediates the 'Lys-48'-linked polyubiquitination of STING1 at 'Lys-150' leading to its proteasomal degradation; the ubiquitination occurs in mitochondria after viral transfection and regulates antiviral responses. Catalyzes ubiquitination and subsequent degradation of ATG4B, thereby inhibiting autophagy. The chain is E3 ubiquitin-protein ligase RNF5 from Homo sapiens (Human).